The chain runs to 287 residues: Nuclease S1 (287 aa).

Positions 1–20 (MPRLLPISAATLALAQLTYG) are cleaved as a signal peptide. Positions 21, 26, 65, and 80 each coordinate a divalent metal cation. Substrate contacts are provided by residues 21-26 (WGNLGH), 65-71 (DTYKYTD), 80-83 (HFID), and 93-98 (GVDYDR). Cystine bridges form between cysteine 92-cysteine 236 and cysteine 100-cysteine 105. Asparagine 112 and asparagine 122 each carry an N-linked (GlcNAc...) asparagine glycan. Histidine 135, aspartate 139, histidine 145, histidine 168, and aspartate 172 together coordinate a divalent metal cation. The substrate binding stretch occupies residues 135–183 (HIIGDIHQPLHDENLEAGGNGIDVTYDGETTNLHHIWDTNMPEEAAGGY). An N-linked (GlcNAc...) asparagine glycan is attached at asparagine 248.

It belongs to the nuclease type I family. Monomer. Zn(2+) is required as a cofactor.

The catalysed reaction is Endonucleolytic cleavage to 5'-phosphomononucleotide and 5'-phosphooligonucleotide end-products.. With respect to regulation, inhibited by inorganic phosphate (Pi). Its function is as follows. Hydrolyzes only single-stranded DNA and RNA without apparent specificity for bases. This Aspergillus oryzae (strain ATCC 42149 / RIB 40) (Yellow koji mold) protein is Nuclease S1.